The following is a 301-amino-acid chain: Glycine--tRNA ligase alpha subunit (301 aa).

The protein belongs to the class-II aminoacyl-tRNA synthetase family. As to quaternary structure, tetramer of two alpha and two beta subunits.

It localises to the cytoplasm. It catalyses the reaction tRNA(Gly) + glycine + ATP = glycyl-tRNA(Gly) + AMP + diphosphate. The protein is Glycine--tRNA ligase alpha subunit of Shewanella amazonensis (strain ATCC BAA-1098 / SB2B).